We begin with the raw amino-acid sequence, 262 residues long: Phosphoribosyl 1,2-cyclic phosphate 1,2-diphosphodiesterase (262 aa).

9 residues coordinate Mn(2+): H6, H8, D13, H38, E63, H76, H193, D245, and H247.

It belongs to the PHP family. Requires Mn(2+) as cofactor.

The catalysed reaction is alpha-D-ribose 1,2-cyclic phosphate 5-phosphate + H2O = D-ribose 2,5-bisphosphate + H(+). It catalyses the reaction D-ribose 2,5-bisphosphate + H2O = D-ribose 5-phosphate + phosphate. Its function is as follows. Involved in degradation of methylphosphonate. Catalyzes the hydrolysis of the phosphate ester at carbon-1 of 5-phospho-D-ribose 1,2-cyclic phosphate to form ribose 2,5-bisphosphate. This intermediate is then hydrolyzed to ribose-5-phosphate and inorganic phosphate. This chain is Phosphoribosyl 1,2-cyclic phosphate 1,2-diphosphodiesterase, found in Eggerthella lenta (strain ATCC 25559 / DSM 2243 / CCUG 17323 / JCM 9979 / KCTC 3265 / NCTC 11813 / VPI 0255 / 1899 B) (Eubacterium lentum).